The primary structure comprises 459 residues: Probable ECA polymerase (459 aa).

The next 11 helical transmembrane spans lie at 3–23, 37–57, 65–85, 119–139, 154–174, 181–201, 206–226, 227–247, 340–360, 377–397, and 409–429; these read LTQFGGLFVVYLISLVFILTL, IFFSLLYLLTFYFGFPLTCLL, VVPVDALLHALLASTCFYGIY, LASVAVVTVGLFFMQNGFLLF, GVALKRFFYFFIPAMLVVYFL, WLFFLISTVAFGILTYVVVGG, IIIAFALFLFIGIVRGWITLW, MLVTAGAIGIVGMFWLALKRY, LVVMGGVLFIPVGAIVVGLII, YKAAILQAFCFGAIFNMIVLA, and VFFCIIFGLCLVIAKLLYWLF.

Belongs to the WzyE family. In terms of assembly, probably part of a complex composed of WzxE, WzyE and WzzE.

The protein localises to the cell inner membrane. It functions in the pathway bacterial outer membrane biogenesis; enterobacterial common antigen biosynthesis. Its function is as follows. Probably involved in the polymerization of enterobacterial common antigen (ECA) trisaccharide repeat units. This Photorhabdus laumondii subsp. laumondii (strain DSM 15139 / CIP 105565 / TT01) (Photorhabdus luminescens subsp. laumondii) protein is Probable ECA polymerase.